The primary structure comprises 846 residues: Pseudolaratriene synthase, chloroplastic (846 aa).

A chloroplast-targeting transit peptide spans 1 to 58 (MSRFTSATHGLNLSIKMPISVSQVPSIRSNTSKYELQKLRSTGRSVLQTRRQLAIINM). Mg(2+) is bound by residues Asp-595, Asp-599, and Asp-747. A DDXXD motif motif is present at residues 595-599 (DDIYD).

Belongs to the terpene synthase family. It depends on Mg(2+) as a cofactor. In terms of tissue distribution, expressed in young and mature roots. Expressed at low levels in barks.

The protein localises to the plastid. The protein resides in the chloroplast. The catalysed reaction is (2E,6E,10E)-geranylgeranyl diphosphate = pseudolaratriene + diphosphate. The protein operates within terpene metabolism. Functionally, converts geranylgeranyl diphosphate to an new 5,7-fused bicyclic diterpene, named pseudolaratriene. Catalyzes the first committed step in pseudolaric acid B (PAB) biosynthesis. PAB exhibits antiproliferative activity by inhibiting microtubule polymerization, and has demonstrated antitumor properties against several cancer types. The sequence is that of Pseudolaratriene synthase, chloroplastic from Pseudolarix amabilis (Golden larch).